We begin with the raw amino-acid sequence, 341 residues long: Myb-related transcription factor, partner of profilin (341 aa).

The 73-residue stretch at 8-80 (VTRLRKPRFS…EVQKRWNDFK (73 aa)) folds into the Myb-like domain. Disordered stretches follow at residues 84-103 (KEKLARVPHSTQSGTAEEAM), 180-210 (LPHLTPSPDPSECPSPPPPGSGTPLLTPSGV), and 309-341 (AEPPRSPSPPPPNKRKRFGYLSQRKRRGRWKNL). Positions 184–200 (TPSPDPSECPSPPPPGS) are enriched in pro residues. Residues 321-341 (NKRKRFGYLSQRKRRGRWKNL) show a composition bias toward basic residues.

It localises to the nucleus. Transcriptional repressor; DNA-binding protein that specifically recognizes the core sequence 5'-YAAC[GT]G-3'. This Xenopus laevis (African clawed frog) protein is Myb-related transcription factor, partner of profilin (mypop).